Consider the following 111-residue polypeptide: Photosystem II reaction center Psb28 protein (111 aa).

It belongs to the Psb28 family. Part of the photosystem II complex.

Its subcellular location is the cellular thylakoid membrane. The polypeptide is Photosystem II reaction center Psb28 protein (Acaryochloris marina (strain MBIC 11017)).